A 265-amino-acid polypeptide reads, in one-letter code: Putative methyltransferase 235L (265 aa).

Positions 1–17 (MDICICYFFTILTTISC) are cleaved as a signal peptide.

Belongs to the methyltransferase superfamily.

The protein is Putative methyltransferase 235L of Acheta domesticus (House cricket).